Consider the following 121-residue polypeptide: Small ribosomal subunit protein uS13 (121 aa).

Residues 92–121 (RKGLPMRGQRTRTNARTRKGPRRAAQALKK) form a disordered region.

Belongs to the universal ribosomal protein uS13 family. In terms of assembly, part of the 30S ribosomal subunit. Forms a loose heterodimer with protein S19. Forms two bridges to the 50S subunit in the 70S ribosome.

Functionally, located at the top of the head of the 30S subunit, it contacts several helices of the 16S rRNA. In the 70S ribosome it contacts the 23S rRNA (bridge B1a) and protein L5 of the 50S subunit (bridge B1b), connecting the 2 subunits; these bridges are implicated in subunit movement. Contacts the tRNAs in the A and P-sites. This Burkholderia cenocepacia (strain HI2424) protein is Small ribosomal subunit protein uS13.